A 593-amino-acid chain; its full sequence is Arginine--tRNA ligase (593 aa).

A 'HIGH' region motif is present at residues 138-148 (ANPTGPLHVGH).

Belongs to the class-I aminoacyl-tRNA synthetase family. As to quaternary structure, monomer.

The protein resides in the cytoplasm. The catalysed reaction is tRNA(Arg) + L-arginine + ATP = L-arginyl-tRNA(Arg) + AMP + diphosphate. The polypeptide is Arginine--tRNA ligase (Burkholderia lata (strain ATCC 17760 / DSM 23089 / LMG 22485 / NCIMB 9086 / R18194 / 383)).